The primary structure comprises 435 residues: D-aminoacyl-tRNA deacylase (435 aa).

It belongs to the DtdA deacylase family. As to quaternary structure, monomer. Zn(2+) is required as a cofactor.

The enzyme catalyses a D-aminoacyl-tRNA + H2O = a tRNA + a D-alpha-amino acid + H(+). It catalyses the reaction glycyl-tRNA(Ala) + H2O = tRNA(Ala) + glycine + H(+). Functionally, D-aminoacyl-tRNA deacylase with broad substrate specificity. By recycling D-aminoacyl-tRNA to D-amino acids and free tRNA molecules, this enzyme counteracts the toxicity associated with the formation of D-aminoacyl-tRNA entities in vivo. This chain is D-aminoacyl-tRNA deacylase, found in Methanosphaerula palustris (strain ATCC BAA-1556 / DSM 19958 / E1-9c).